Reading from the N-terminus, the 360-residue chain is Phospho-N-acetylmuramoyl-pentapeptide-transferase (360 aa).

A run of 10 helical transmembrane segments spans residues 24 to 44 (RAVMAALTALAFSLMFGPWTI), 69 to 89 (GTPTMGGSLILTAITVSTLLW), 92 to 112 (WANPYIWILLGVLLATGALGF), 133 to 153 (MVWQSSVAIIASLALFYLAAN), 158 to 178 (ILIVPFFKQIALPLGVVGFLV), 199 to 219 (GLATFPVVLVAAGLAIFAYAS), 239 to 259 (VVIFCTAMCGACLGFLWFNAY), 263 to 283 (VFMGDVGALALGAALGTVAVI), 288 to 308 (FVLVIMGGLFVVEAVSVMLQV), and 337 to 357 (QVVVRFWIITIVLVLIGLSTL).

Belongs to the glycosyltransferase 4 family. MraY subfamily. It depends on Mg(2+) as a cofactor.

It is found in the cell inner membrane. The catalysed reaction is UDP-N-acetyl-alpha-D-muramoyl-L-alanyl-gamma-D-glutamyl-meso-2,6-diaminopimeloyl-D-alanyl-D-alanine + di-trans,octa-cis-undecaprenyl phosphate = di-trans,octa-cis-undecaprenyl diphospho-N-acetyl-alpha-D-muramoyl-L-alanyl-D-glutamyl-meso-2,6-diaminopimeloyl-D-alanyl-D-alanine + UMP. Its pathway is cell wall biogenesis; peptidoglycan biosynthesis. Functionally, catalyzes the initial step of the lipid cycle reactions in the biosynthesis of the cell wall peptidoglycan: transfers peptidoglycan precursor phospho-MurNAc-pentapeptide from UDP-MurNAc-pentapeptide onto the lipid carrier undecaprenyl phosphate, yielding undecaprenyl-pyrophosphoryl-MurNAc-pentapeptide, known as lipid I. The chain is Phospho-N-acetylmuramoyl-pentapeptide-transferase from Neisseria meningitidis serogroup C / serotype 2a (strain ATCC 700532 / DSM 15464 / FAM18).